The following is an 86-amino-acid chain: Small ribosomal subunit protein bS20 (86 aa).

Positions 1–25 (MANIKSQIKRIRTNEKARQRNKAYK) are disordered. Residues 12-25 (RTNEKARQRNKAYK) are compositionally biased toward basic and acidic residues.

Belongs to the bacterial ribosomal protein bS20 family.

Its function is as follows. Binds directly to 16S ribosomal RNA. This is Small ribosomal subunit protein bS20 from Beutenbergia cavernae (strain ATCC BAA-8 / DSM 12333 / CCUG 43141 / JCM 11478 / NBRC 16432 / NCIMB 13614 / HKI 0122).